The following is a 105-amino-acid chain: Pyrimidine/purine nucleoside phosphorylase (105 aa).

This sequence belongs to the nucleoside phosphorylase PpnP family.

It carries out the reaction a purine D-ribonucleoside + phosphate = a purine nucleobase + alpha-D-ribose 1-phosphate. The enzyme catalyses adenosine + phosphate = alpha-D-ribose 1-phosphate + adenine. The catalysed reaction is cytidine + phosphate = cytosine + alpha-D-ribose 1-phosphate. It catalyses the reaction guanosine + phosphate = alpha-D-ribose 1-phosphate + guanine. It carries out the reaction inosine + phosphate = alpha-D-ribose 1-phosphate + hypoxanthine. The enzyme catalyses thymidine + phosphate = 2-deoxy-alpha-D-ribose 1-phosphate + thymine. The catalysed reaction is uridine + phosphate = alpha-D-ribose 1-phosphate + uracil. It catalyses the reaction xanthosine + phosphate = alpha-D-ribose 1-phosphate + xanthine. Its function is as follows. Catalyzes the phosphorolysis of diverse nucleosides, yielding D-ribose 1-phosphate and the respective free bases. Can use uridine, adenosine, guanosine, cytidine, thymidine, inosine and xanthosine as substrates. Also catalyzes the reverse reactions. The protein is Pyrimidine/purine nucleoside phosphorylase of Cupriavidus necator (strain ATCC 17699 / DSM 428 / KCTC 22496 / NCIMB 10442 / H16 / Stanier 337) (Ralstonia eutropha).